The primary structure comprises 470 residues: Uronate isomerase (470 aa).

It belongs to the metallo-dependent hydrolases superfamily. Uronate isomerase family.

The enzyme catalyses D-glucuronate = D-fructuronate. The catalysed reaction is aldehydo-D-galacturonate = keto-D-tagaturonate. It functions in the pathway carbohydrate metabolism; pentose and glucuronate interconversion. This Vibrio parahaemolyticus serotype O3:K6 (strain RIMD 2210633) protein is Uronate isomerase.